The following is a 971-amino-acid chain: UPF0182 protein CMS1887 (971 aa).

7 consecutive transmembrane segments (helical) span residues 16–36 (LAIT…FAGF), 56–76 (WGAG…PVFV), 108–128 (LAMF…ASSG), 161–181 (FYHA…LGVL), 205–225 (IQIA…IWLD), 255–275 (TILA…AAIG), and 281–301 (IIGT…YPAI). Over residues 687-702 (QDLWTTPNDPTATTEA) the composition is skewed to polar residues. Disordered regions lie at residues 687 to 706 (QDLW…GTPA) and 874 to 924 (GATA…AQDV). Composition is skewed to low complexity over residues 884 to 900 (PTTP…TDGA) and 907 to 921 (STPT…AAPA).

It belongs to the UPF0182 family.

It is found in the cell membrane. The sequence is that of UPF0182 protein CMS1887 from Clavibacter sepedonicus (Clavibacter michiganensis subsp. sepedonicus).